A 318-amino-acid polypeptide reads, in one-letter code: Ferric enterobactin-binding periplasmic protein FepB (318 aa).

An N-terminal signal peptide occupies residues Met1–Ala26. Residues Arg48–Phe318 enclose the Fe/B12 periplasmic-binding domain.

The protein belongs to the bacterial solute-binding protein 8 family. As to quaternary structure, the complex is composed of two ATP-binding proteins (FepC), two transmembrane proteins (FepD and FepG) and a solute-binding protein (FepB).

It localises to the periplasm. Functionally, part of the ABC transporter complex FepBDGC involved in ferric enterobactin uptake. Binds ferric enterobactin. The protein is Ferric enterobactin-binding periplasmic protein FepB (fepB) of Escherichia coli O6:H1 (strain CFT073 / ATCC 700928 / UPEC).